Here is a 179-residue protein sequence, read N- to C-terminus: ATP synthase subunit delta (179 aa).

Belongs to the ATPase delta chain family. F-type ATPases have 2 components, F(1) - the catalytic core - and F(0) - the membrane proton channel. F(1) has five subunits: alpha(3), beta(3), gamma(1), delta(1), epsilon(1). F(0) has three main subunits: a(1), b(2) and c(10-14). The alpha and beta chains form an alternating ring which encloses part of the gamma chain. F(1) is attached to F(0) by a central stalk formed by the gamma and epsilon chains, while a peripheral stalk is formed by the delta and b chains.

It is found in the cell inner membrane. F(1)F(0) ATP synthase produces ATP from ADP in the presence of a proton or sodium gradient. F-type ATPases consist of two structural domains, F(1) containing the extramembraneous catalytic core and F(0) containing the membrane proton channel, linked together by a central stalk and a peripheral stalk. During catalysis, ATP synthesis in the catalytic domain of F(1) is coupled via a rotary mechanism of the central stalk subunits to proton translocation. In terms of biological role, this protein is part of the stalk that links CF(0) to CF(1). It either transmits conformational changes from CF(0) to CF(1) or is implicated in proton conduction. The sequence is that of ATP synthase subunit delta from Anaeromyxobacter dehalogenans (strain 2CP-C).